Consider the following 584-residue polypeptide: Sensor histidine kinase/phosphatase LytS (584 aa).

The next 6 membrane-spanning stretches (helical) occupy residues 2–22, 42–62, 92–112, 121–141, 154–174, and 186–206; these read LSLTMLLLERVGLIIILAYVL, WQLCIIFSLFALMSNLTGIVI, VAGLVGGPFVGLFVGVISGIF, AQVYLISSIFIGIIAGYFGLQ, SAMIGIVMEMIQMLSILTFSH, and IALPMIIVNSVGTAIFMSIII. Positions 311–363 constitute a GAF domain; it reads HPNCPLRAAIVIPLEMHGSIVGTLKMYFTNPNDLTFVERQLAEGLANIFSSQI. In terms of domain architecture, Histidine kinase spans 379–461; that stretch reads EIKSLQAQVS…RYPGRFNINI (83 aa). At His-390 the chain carries Phosphohistidine; by autocatalysis.

Autophosphorylated on His-390.

The protein resides in the cell membrane. The enzyme catalyses ATP + protein L-histidine = ADP + protein N-phospho-L-histidine.. Member of the two-component regulatory system LytR/LytS that regulates genes involved in autolysis, programmed cell death, biofilm formation and cell wall metabolism. Also participates in sensing and responding to host defense cationic antimicrobial peptides (HDPs). Functions as a sensor protein kinase which is autophosphorylated at a histidine residue and transfers its phosphate group to the conserved aspartic acid residue in the regulatory domain of LytR. In turn, LytR binds to the upstream promoter regions of target genes including lrgA and lrgB, to positively regulate their expression. Also possesses a phosphatase activity that dephosphorylates and thus inactivates LytR. This chain is Sensor histidine kinase/phosphatase LytS (lytS), found in Staphylococcus aureus (strain USA300).